We begin with the raw amino-acid sequence, 241 residues long: Probable transcriptional regulatory protein H16_A0916 (241 aa).

Belongs to the TACO1 family.

It is found in the cytoplasm. In Cupriavidus necator (strain ATCC 17699 / DSM 428 / KCTC 22496 / NCIMB 10442 / H16 / Stanier 337) (Ralstonia eutropha), this protein is Probable transcriptional regulatory protein H16_A0916.